The primary structure comprises 160 residues: Afimbrial adhesin AFA-III (160 aa).

The first 21 residues, 1–21, serve as a signal peptide directing secretion; sequence MKKLAIMAAASMVFAVSSAHA. A receptor-binding region spans residues 22 to 75; sequence GFTPSGTTGTTKLTVTEECQVRVGDLTVAKTRGQLTDAAPIGPVTVQALGCNAR.

The protein belongs to the Dr-adhesin family.

Its subcellular location is the fimbrium. In terms of biological role, hemagglutinins of uropathogenic E.coli mediate adherence to the upper urinary tract. These adhesins bind to the Dr blood group antigen and also agglutinate human erythrocytes in the presence of D-mannose (mannose-resistant hemagglutination (MRHA)). This is Afimbrial adhesin AFA-III (afaE3) from Escherichia coli.